The primary structure comprises 125 residues: uncharacterized protein (125 aa).

Its subcellular location is the plastid. This is an uncharacterized protein from Euglena longa (Euglenophycean alga).